Here is a 152-residue protein sequence, read N- to C-terminus: Transcriptional regulator MraZ (152 aa).

2 SpoVT-AbrB domains span residues 5–52 and 81–124; these read ATLV…PLPE and ASEC…DETT.

Belongs to the MraZ family. As to quaternary structure, forms oligomers.

It is found in the cytoplasm. The protein localises to the nucleoid. In terms of biological role, negatively regulates its own expression and that of the subsequent genes in the proximal part of the division and cell wall (dcw) gene cluster. Acts by binding directly to DNA. May also regulate the expression of genes outside the dcw cluster. The chain is Transcriptional regulator MraZ from Shigella dysenteriae serotype 1 (strain Sd197).